The sequence spans 469 residues: Glutamine synthetase (469 aa).

The GS beta-grasp domain occupies His13 to Thr97. Residues Pro105 to Val469 form the GS catalytic domain. The Mg(2+) site is built by Glu130 and Glu132. Residue Glu208 coordinates ATP. The Mg(2+) site is built by Glu213 and Glu221. L-glutamate is bound by residues Asn265–Gly266 and Gly266. His270 is a Mg(2+) binding site. ATP contacts are provided by residues His272–Ser274 and Ser274. L-glutamate-binding residues include Arg322, Glu328, and Arg340. ATP contacts are provided by Arg340, Arg345, and Lys353. Glu358 provides a ligand contact to Mg(2+). Arg360 contacts L-glutamate. Tyr398 carries the post-translational modification O-AMP-tyrosine.

Belongs to the glutamine synthetase family. In terms of assembly, oligomer of 12 subunits arranged in the form of two hexameric ring. It depends on Mg(2+) as a cofactor.

It localises to the cytoplasm. It carries out the reaction L-glutamate + NH4(+) + ATP = L-glutamine + ADP + phosphate + H(+). Its activity is regulated as follows. The activity of this enzyme could be controlled by adenylation under conditions of abundant glutamine. Functionally, catalyzes the ATP-dependent biosynthesis of glutamine from glutamate and ammonia. This chain is Glutamine synthetase, found in Escherichia coli O157:H7.